The sequence spans 104 residues: Large ribosomal subunit protein uL24 (104 aa).

Belongs to the universal ribosomal protein uL24 family. As to quaternary structure, part of the 50S ribosomal subunit.

Functionally, one of two assembly initiator proteins, it binds directly to the 5'-end of the 23S rRNA, where it nucleates assembly of the 50S subunit. In terms of biological role, one of the proteins that surrounds the polypeptide exit tunnel on the outside of the subunit. In Sodalis glossinidius (strain morsitans), this protein is Large ribosomal subunit protein uL24.